A 141-amino-acid chain; its full sequence is Large ribosomal subunit protein uL13 (141 aa).

This sequence belongs to the universal ribosomal protein uL13 family. As to quaternary structure, part of the 50S ribosomal subunit.

This protein is one of the early assembly proteins of the 50S ribosomal subunit, although it is not seen to bind rRNA by itself. It is important during the early stages of 50S assembly. This chain is Large ribosomal subunit protein uL13, found in Helicobacter pylori (strain Shi470).